Consider the following 613-residue polypeptide: Zinc metalloproteinase-disintegrin-like MTP8 (613 aa).

Positions 1–20 (MIEVLLVTICFTVFPYQGSP) are cleaved as a signal peptide. Positions 21-191 (IILESGNVND…DETIEKISQL (171 aa)) are excised as a propeptide. A Peptidase M12B domain is found at 205–401 (KYIELYVVVD…VRPQCILNKP (197 aa)). Residue Glu208 coordinates Ca(2+). N-linked (GlcNAc...) asparagine glycosylation is present at Asn282. Residue Asp292 participates in Ca(2+) binding. Disulfide bonds link Cys316–Cys396, Cys356–Cys380, and Cys358–Cys363. Residues His341, His345, and His351 each coordinate Zn(2+). Ca(2+)-binding residues include Cys396, Asn399, Asn414, Phe416, Glu418, Glu421, and Asp424. The Disintegrin domain maps to 409–495 (PPVCGNYFVE…KCPTDSFQRN (87 aa)). 15 disulfide bridges follow: Cys412–Cys441, Cys423–Cys436, Cys425–Cys431, Cys435–Cys458, Cys449–Cys455, Cys454–Cys480, Cys467–Cys487, Cys474–Cys506, Cys499–Cys511, Cys518–Cys568, Cys533–Cys575, Cys543–Cys577, Cys546–Cys556, Cys563–Cys601, and Cys595–Cys606. An N-linked (GlcNAc...) asparagine glycan is attached at Asn437. Positions 473 to 475 (DCD) match the D/ECD-tripeptide motif. Asp475, Leu476, Glu478, and Asp490 together coordinate Ca(2+). Residues Asn550 and Asn572 are each glycosylated (N-linked (GlcNAc...) asparagine).

This sequence belongs to the venom metalloproteinase (M12B) family. P-III subfamily. In terms of assembly, monomer. The cofactor is Zn(2+). Expressed by the venom gland.

It is found in the secreted. In terms of biological role, snake venom zinc metalloproteinase that may impair hemostasis in the prey. In Drysdalia coronoides (White-lipped snake), this protein is Zinc metalloproteinase-disintegrin-like MTP8.